Reading from the N-terminus, the 156-residue chain is MIQSQHSQTARHALAETVVLAKARKNLSFAQLTEGTGLSEAFVTAALLGQHALPADAARVVADKLGLDDDAVLLLQMIPLRGSIDDRVPTDPTIYRFYEMLQVYGTTLKALVHEKFGDGIISAINFRLDVKKVDDPEGGSRAVITLDGKYLPTKPF.

Residues arginine 96, glutamate 99, and serine 122 contribute to the active site.

This sequence belongs to the cyanase family.

It catalyses the reaction cyanate + hydrogencarbonate + 3 H(+) = NH4(+) + 2 CO2. Functionally, catalyzes the reaction of cyanate with bicarbonate to produce ammonia and carbon dioxide. This Burkholderia orbicola (strain MC0-3) protein is Cyanate hydratase.